Here is a 64-residue protein sequence, read N- to C-terminus: SPbeta prophage-derived uncharacterized protein YoqI (64 aa).

The sequence is that of SPbeta prophage-derived uncharacterized protein YoqI (yoqI) from Bacillus subtilis (strain 168).